A 504-amino-acid polypeptide reads, in one-letter code: Lysine--tRNA ligase (504 aa).

The Mg(2+) site is built by Glu411 and Glu418.

It belongs to the class-II aminoacyl-tRNA synthetase family. As to quaternary structure, homodimer. Requires Mg(2+) as cofactor.

The protein resides in the cytoplasm. It carries out the reaction tRNA(Lys) + L-lysine + ATP = L-lysyl-tRNA(Lys) + AMP + diphosphate. This Clostridium botulinum (strain Okra / Type B1) protein is Lysine--tRNA ligase.